The following is a 326-amino-acid chain: Meso-diaminopimelate D-dehydrogenase (326 aa).

Residues 11–14 (YGNL), 35–37 (TRR), 69–72 (CGGS), 92–94 (SFD), and 121–125 (VGWDP) contribute to the NADP(+) site. Substrate-binding positions include Asp94, Asp124, Trp148, 154 to 155 (QG), Thr173, Arg199, His249, and Asn276.

It belongs to the diaminopimelate dehydrogenase family. Homodimer.

It carries out the reaction meso-2,6-diaminopimelate + NADP(+) + H2O = (S)-2-amino-6-oxoheptanedioate + NH4(+) + NADPH + H(+). It participates in amino-acid biosynthesis; L-lysine biosynthesis via DAP pathway; DL-2,6-diaminopimelate from (S)-tetrahydrodipicolinate: step 1/1. With respect to regulation, the enzyme is completely inhibited by p-chloromercuribenzoate and HgCl(2) in vitro. Thioglycollate, L-cysteine and Cu(2+) also strongly inhibit the enzyme. Its function is as follows. Catalyzes the reversible NADPH-dependent reductive amination of L-2-amino-6-oxopimelate, the acyclic form of L-tetrahydrodipicolinate, to generate the meso compound, D,L-2,6-diaminopimelate. Probably plays a role in lysine biosynthesis. Is highly specific for meso-2,6-diaminopimelate as the electron donor, since the following amino acids are inert for the oxidative deamination reaction: DL-2-aminopimelate, D-glutamate, L-glutamate, D-aspartate, L-aspartate, D-alanine, L-alanine, D-valine, L-valine, D-lysine, L-lysine, D-phenylalanine, L-phenylalanine, D-leucine, L-leucine, D-threonine, L-threonine, D-serine, L-serine, D-tryptophan, L-tryptophan, D-cysteine, L-cysteine, D-histidine, L-histidine, D-methionine, D-arginine, D-proline, D-asparagine, D-glutamine, D-isoleucine and D-ornithine. Moreover, exclusively uses NADP as the electron acceptor for the oxidative deamination of meso-DAP; NAD is inert. The polypeptide is Meso-diaminopimelate D-dehydrogenase (ddh) (Ureibacillus thermosphaericus).